A 559-amino-acid polypeptide reads, in one-letter code: 2-isopropylmalate synthase (559 aa).

Residues 33–307 (PIWCSSDLRD…NPDLDFSDID (275 aa)) enclose the Pyruvate carboxyltransferase domain. 4 residues coordinate Mg(2+): aspartate 42, histidine 246, histidine 248, and asparagine 282. A regulatory domain region spans residues 439–559 (ANTPYALVSH…SLSQPEAKAA (121 aa)).

It belongs to the alpha-IPM synthase/homocitrate synthase family. LeuA type 2 subfamily. In terms of assembly, homodimer. Mg(2+) is required as a cofactor.

The protein resides in the cytoplasm. The catalysed reaction is 3-methyl-2-oxobutanoate + acetyl-CoA + H2O = (2S)-2-isopropylmalate + CoA + H(+). It functions in the pathway amino-acid biosynthesis; L-leucine biosynthesis; L-leucine from 3-methyl-2-oxobutanoate: step 1/4. Its function is as follows. Catalyzes the condensation of the acetyl group of acetyl-CoA with 3-methyl-2-oxobutanoate (2-ketoisovalerate) to form 3-carboxy-3-hydroxy-4-methylpentanoate (2-isopropylmalate). This Pseudomonas fluorescens (strain Pf0-1) protein is 2-isopropylmalate synthase.